Here is a 354-residue protein sequence, read N- to C-terminus: Arginase-2, mitochondrial (354 aa).

Residues 1 to 22 (MFLRSSVSRLLHGQIPCALTRS) constitute a mitochondrion transit peptide. Residues His-120, Asp-143, His-145, and Asp-147 each coordinate Mn(2+). Substrate is bound by residues 145–149 (HADIN), 156–158 (SGN), and Glu-202. Mn(2+)-binding residues include Asp-251 and Asp-253. Substrate-binding residues include Thr-265 and Glu-296.

Belongs to the arginase family. As to quaternary structure, homotrimer. Mn(2+) serves as cofactor.

It localises to the mitochondrion. It carries out the reaction L-arginine + H2O = urea + L-ornithine. The protein operates within nitrogen metabolism; urea cycle; L-ornithine and urea from L-arginine: step 1/1. Functionally, may play a role in the regulation of extra-urea cycle arginine metabolism and also in down-regulation of nitric oxide synthesis. Extrahepatic arginase functions to regulate L-arginine bioavailability to nitric oxid synthase (NOS). Arginine metabolism is a critical regulator of innate and adaptive immune responses. Seems to be involved in negative regulation of the survival capacity of activated T cells. May suppress inflammation-related signaling in asthmatic airway epithelium. May play a role in promoting prenatal immune suppression. Regulates RPS6KB1 signaling, which promotes endothelial cell senescence and inflammation and implicates NOS3/eNOS dysfunction. Can inhibit endothelial autophagy independently of its enzymatic activity implicating mTORC2 signaling. Involved in vascular smooth muscle cell senescence and apoptosis independently of its enzymatic activity. The sequence is that of Arginase-2, mitochondrial (Arg2) from Rattus norvegicus (Rat).